A 111-amino-acid polypeptide reads, in one-letter code: UPF0060 membrane protein Pden_1837 (111 aa).

4 consecutive transmembrane segments (helical) span residues I7–W27, L30–L50, A62–E82, and I91–A111.

The protein belongs to the UPF0060 family.

The protein resides in the cell inner membrane. This chain is UPF0060 membrane protein Pden_1837, found in Paracoccus denitrificans (strain Pd 1222).